Consider the following 84-residue polypeptide: Small ribosomal subunit protein bS18B (84 aa).

The span at 1–10 (MAVKRAPSKK) shows a compositional bias: basic residues. The disordered stretch occupies residues 1 to 20 (MAVKRAPSKKVRAEQARRPK).

The protein belongs to the bacterial ribosomal protein bS18 family. Part of the 30S ribosomal subunit. Forms a tight heterodimer with protein bS6.

In terms of biological role, binds as a heterodimer with protein bS6 to the central domain of the 16S rRNA, where it helps stabilize the platform of the 30S subunit. This Nocardia farcinica (strain IFM 10152) protein is Small ribosomal subunit protein bS18B.